We begin with the raw amino-acid sequence, 625 residues long: DELLA protein SLR1 (625 aa).

The disordered stretch occupies residues 1–34 (MKREYQEAGGSSGGGSSADMGSCKDKVMAGAAGE). The DELLA motif signature appears at 39-43 (DELLA). The disordered stretch occupies residues 167–208 (TADPSAADSARDTKRMRTGGGSTSSSSSSSSSLGGGASRGSV). A compositionally biased stretch (low complexity) spans 189–198 (TSSSSSSSSS). The 390-residue stretch at 232–621 (VDTQEAGIRL…RPLIATSAWR (390 aa)) folds into the GRAS domain. Residues 239–294 (IRLVHALLACAEAVQQENFAAAEALVKQIPTLAASQGGAMRKVAAYFGEALARRVY) are leucine repeat I (LRI). The tract at residues 241 to 278 (LVHALLACAEAVQQENFAAAEALVKQIPTLAASQGGAM) is required for possible homodimerization. Residues 246-250 (LACAE) carry the LxCxE motif motif. The tract at residues 313–378 (HAHFYESCPY…GGPPSFRLTG (66 aa)) is VHIID. The short motif at 344–348 (VHVVD) is the VHIID element. A leucine repeat II (LRII) region spans residues 392–431 (QVGWKLAQFAHTIRVDFQYRGLVAATLADLEPFMLQPEGE). Residues 441-542 (IAVNSVFELH…EVYLGRQICN (102 aa)) form a PFYRE region. Positions 449-453 (LHRLL) match the LXXLL motif motif. The segment at 545 to 621 (ACEGAERTER…RPLIATSAWR (77 aa)) is SAW.

It belongs to the GRAS family. DELLA subfamily.

In terms of biological role, probable transcriptional regulator that acts as a repressor of the gibberellin (GA) signaling pathway. Probably acts by participating in large multiprotein complexes that repress transcription of GA-inducible genes. Upon GA application, it is degraded by the proteasome, allowing the GA signaling pathway. In contrast, its overexpression prevents the GA signaling pathway and induces a dwarf phenotype. The polypeptide is DELLA protein SLR1 (Oryza sativa subsp. indica (Rice)).